Here is a 210-residue protein sequence, read N- to C-terminus: Vacuolar protein sorting-associated protein 28 homolog (210 aa).

The region spanning methionine 1–aspartate 106 is the VPS28 N-terminal domain. Residues asparagine 110–asparagine 206 enclose the VPS28 C-terminal domain.

It belongs to the VPS28 family. In terms of assembly, component of the ESCRT-I complex (endosomal sorting complex required for transport I). As to expression, expressed in embryos.

The protein resides in the endosome. Functionally, component of the ESCRT-I complex, a regulator of vesicular trafficking process. The polypeptide is Vacuolar protein sorting-associated protein 28 homolog (vps-28) (Caenorhabditis elegans).